A 105-amino-acid chain; its full sequence is Heat shock protein HspQ (105 aa).

Positions 74–105 are disordered; it reads SSELQDERPEQPSMDELAQTIRKQRQAPRLRN. Positions 95 to 105 are enriched in basic residues; the sequence is RKQRQAPRLRN.

This sequence belongs to the HspQ family.

It localises to the cytoplasm. In terms of biological role, involved in the degradation of certain denaturated proteins, including DnaA, during heat shock stress. The polypeptide is Heat shock protein HspQ (Shigella dysenteriae serotype 1 (strain Sd197)).